Consider the following 157-residue polypeptide: uncharacterized protein (157 aa).

The N-acetyltransferase domain maps to 9-146 (LLINYKTLDE…GDFYVWHPET (138 aa)).

This is an uncharacterized protein from Bacillus cereus (strain ATCC 10987 / NRS 248).